The following is a 485-amino-acid chain: Glycogen synthase (485 aa).

Lys15 serves as a coordination point for ADP-alpha-D-glucose.

It belongs to the glycosyltransferase 1 family. Bacterial/plant glycogen synthase subfamily.

It carries out the reaction [(1-&gt;4)-alpha-D-glucosyl](n) + ADP-alpha-D-glucose = [(1-&gt;4)-alpha-D-glucosyl](n+1) + ADP + H(+). It functions in the pathway glycan biosynthesis; glycogen biosynthesis. In terms of biological role, synthesizes alpha-1,4-glucan chains using ADP-glucose. This is Glycogen synthase from Geobacillus thermodenitrificans (strain NG80-2).